Here is a 749-residue protein sequence, read N- to C-terminus: DNA topoisomerase 1 (749 aa).

Residues 1-110 (MSDSEDVALS…PKKEDSVETD (110 aa)) form a disordered region. A compositionally biased stretch (basic and acidic residues) spans 62–75 (LSKEKVNNKVKDEL). The span at 79-94 (PVTPKKTPKISKTPVS) shows a compositional bias: low complexity. The span at 101 to 110 (PKKEDSVETD) shows a compositional bias: basic and acidic residues. 3 interaction with DNA regions span residues 338–339 (KY), 401–406 (RAGGEK), and 493–495 (TAK). Positions 345–749 (NSSIKGISDM…IESTDENWRF (405 aa)) constitute a Topo IB-type catalytic domain. Residue Y707 is the O-(3'-phospho-DNA)-tyrosine intermediate of the active site.

It belongs to the type IB topoisomerase family.

Its subcellular location is the nucleus. The protein resides in the nucleolus. It is found in the nucleoplasm. It catalyses the reaction ATP-independent breakage of single-stranded DNA, followed by passage and rejoining.. In terms of biological role, releases the supercoiling and torsional tension of DNA introduced during the DNA replication and transcription by transiently cleaving and rejoining one strand of the DNA duplex. Introduces a single-strand break via transesterification at the specific target site 5'-[CT]CCTTp site in duplex DNA. The scissile phosphodiester is attacked by the catalytic tyrosine of the enzyme, resulting in the formation of a DNA-(3'-phosphotyrosyl)-enzyme intermediate and the expulsion of a 5'-OH DNA strand. The free DNA strand then undergoes passage around the unbroken strand thus removing DNA supercoils. Finally, in the religation step, the DNA 5'-OH attacks the covalent intermediate to expel the active-site tyrosine and restore the DNA phosphodiester backbone. The polypeptide is DNA topoisomerase 1 (TOP1) (Candidozyma auris (Yeast)).